Reading from the N-terminus, the 575-residue chain is Probable methionine--tRNA ligase, mitochondrial (575 aa).

A 'HIGH' region motif is present at residues 52–62 (FYVNGPPHIGH). The 'KMSKS' region signature appears at 352-356 (KMSKS). Lysine 355 is an ATP binding site.

Belongs to the class-I aminoacyl-tRNA synthetase family.

Its subcellular location is the mitochondrion matrix. The enzyme catalyses tRNA(Met) + L-methionine + ATP = L-methionyl-tRNA(Met) + AMP + diphosphate. The polypeptide is Probable methionine--tRNA ligase, mitochondrial (mmetS) (Dictyostelium discoideum (Social amoeba)).